Reading from the N-terminus, the 308-residue chain is 3'(2'),5'-bisphosphate nucleotidase 1 (308 aa).

Ala2 is subject to N-acetylalanine. Asp51 acts as the Proton acceptor in catalysis. The Mg(2+) site is built by Glu74, Asp117, Leu119, and Asp120. The active-site Proton acceptor is Thr122. Position 122 is a phosphothreonine (Thr122). Thr195, His198, Gly220, and Lys224 together coordinate AMP. Ser240 carries the post-translational modification Phosphoserine. The residue at position 244 (Lys244) is an N6-succinyllysine. Asp247 lines the Mg(2+) pocket.

Belongs to the inositol monophosphatase superfamily. Mg(2+) serves as cofactor. Highly expressed in kidney, liver, pancreas and heart. Detected at lower levels in brain, placenta, lung and skeletal muscle.

It catalyses the reaction adenosine 3',5'-bisphosphate + H2O = AMP + phosphate. It carries out the reaction adenosine 2',5'-bisphosphate + H2O = AMP + phosphate. The catalysed reaction is 3'-phosphoadenylyl sulfate + H2O = adenosine 5'-phosphosulfate + phosphate. The enzyme catalyses 1D-myo-inositol 1,4-bisphosphate + H2O = 1D-myo-inositol 4-phosphate + phosphate. It catalyses the reaction 1D-myo-inositol 1,3,4-trisphosphate + H2O = 1D-myo-inositol 3,4-bisphosphate + phosphate. With respect to regulation, is very sensitive to inhibition by Li(+) (IC(50)=0.3 mM for hydrolysis of PAP; IC(50)=0.6 mM for hydrolysis of inositol-1,4-bis-phosphate). Is not affected by high Na(+) concentrations. Phosphatase that converts 3'(2')-phosphoadenosine 5'-phosphate (PAP) to AMP and inositol 1,4-bisphosphate (Ins(1,4)P2) to inositol 4-phosphate. Is also able to hydrolyze adenosine 3'-phosphate 5'-phosphosulfate (PAPS) to adenosine 5'-phosphosulfate (APS). Probably prevents the toxic accumulation of PAP, a compound which inhibits a variety of proteins, including PAPS-utilizing enzymes such as sulfotransferases, and RNA processing enzymes. Could also play a role in inositol recycling and phosphoinositide metabolism. Is not active on 3'-AMP, inositol-1-phosphate and inositol-1,4,5-triphosphate. The polypeptide is 3'(2'),5'-bisphosphate nucleotidase 1 (BPNT1) (Homo sapiens (Human)).